The sequence spans 1066 residues: MQSTDLGNKESGKIWHRKPSPATRDGIIVNIIHNTSDYHPKVLRFLNVAFDGTGDCLIAGDHQGNIYVFDLHGNRFNLVQRTAQACTALAFNLRRKSEFLVALADYSIKCFDTVTKELVSWMRGHESSVFSISVHASGKYAITTSSDTAQLWDLDTFQRKRKLNIRQSVGIQKVFFLPLSNTILSCFKDNSIFAWECDTLFCKYQLPAPPESSSILYKVFAVTRDGRILAAGGKSNHLHLWCLEARQLFRIIQMPTKVRAIRHLEFLPDSFDAGSNQVLGVLSQDGIMRFINMQTCKLLFEIGSLDEGISSSAISPHGRYIASIMENGSLNIYSVQALTQEINKPPPPLVKVIEDLPKNKLSSSDLKMKVTSGRVQQPAKSRESKMQTRILKQDLTGDFESKKNELPDGLNKKRLQILLKGYGEYPTKYRMFIWRSLLQLPENHTAFSTLIDKGTHVAFLNLQKKYPIKSRKLLRVLQRTLSALAHWSVIFSDTPYLPLLAFPFVKLFQNNQLICFEVIATLIINWCQHWFEYFPNPPINILSMIENVLAFHDKELLQHFIDHDITSQLYAWPLLETVFSEVLTREEWLKLFDNIFSNHPSFLLMTVVAYNICSRTPLLSCNLKDDFEFFFHHRNNLDINVVIRQVYHLMETTPTDIHPDSMLNVFVALTKGQYPVFNQYPKFIVDYQTQERERIRNDELDYLRERQTVEDMQAKVDQQRVEDEAWYQKQELLRKAEETRREMLLQEEEKMIQQRQRLAAVKRELKVKEMHLQDAARRRFLKLQQDQQEMELRRLDDEIGRKVYMRDREIAATARDLEMRQLELESQKRLYEKNLTENQEALAKEMRADADAYRRKVDLEEHMFHKLIEAGETQSQKTQKVIKENLAKAEQACLNTDWQIQSLHKQKCDDLQRNKCYQEVAKLLRENRRKEIEIINAMVEEEAKKWKEAEGKEFRLRSAKKASALSDASRKWFLKQEINAAVEHAENPCHKEEPRFQNEQDSSCLPRTSQLNDSSEMDPSTQISLNRRAVEWDTTGQNLIKKVRNLRQRLTARARHRCQTPHLLAA.

7 WD repeats span residues 33-74 (HNTS…LHGN), 75-116 (RFNL…TVTK), 117-157 (ELVS…LDTF), 158-200 (QRKR…CDTL), 201-248 (FCKY…ARQL), 249-296 (FRII…MQTC), and 297-334 (KLLFEIGSLDEGISSSAISPHGRYIASIMENGSLNIYS). The region spanning 424–599 (EYPTKYRMFI…KLFDNIFSNH (176 aa)) is the Rab-GAP TBC domain. Coiled coils occupy residues 728–861 (QKQE…DLEE) and 914–948 (NKCYQEVAKLLRENRRKEIEIINAMVEEEAKKWKE). A compositionally biased stretch (basic and acidic residues) spans 989-998 (CHKEEPRFQN). The segment at 989-1020 (CHKEEPRFQNEQDSSCLPRTSQLNDSSEMDPS) is disordered. Over residues 999-1020 (EQDSSCLPRTSQLNDSSEMDPS) the composition is skewed to polar residues. Positions 1053–1056 (RARH) are mediates direct interaction with PJA2.

Interacts with PJA2; the interaction is direct and recruits PJA2 to centrosomes. Interacts with OFD1; regulates its activity in cilium assembly. Interacts with PRKACA.

It localises to the cytoplasm. Its subcellular location is the cytoskeleton. The protein localises to the microtubule organizing center. The protein resides in the centrosome. It is found in the centriolar satellite. It localises to the cilium basal body. Its function is as follows. Molecular adapter which is involved in cilium biogenesis. Part of a functional complex including OFD1 a centriolar protein involved in cilium assembly. Could regulate the cAMP-dependent phosphorylation of OFD1, and its subsequent ubiquitination by PJA2 which ultimately leads to its proteasomal degradation. This is TBC1 domain family member 31 from Homo sapiens (Human).